The following is a 727-amino-acid chain: Two-component response regulator-like APRR7 (727 aa).

Positions 1–47 (MNANEEGEGSRYPITDRKTGETKFDRVESRTEKHSEEEKTNGITMDV) are disordered. Residues 14–40 (ITDRKTGETKFDRVESRTEKHSEEEKT) are compositionally biased toward basic and acidic residues. The Response regulatory domain maps to 79–197 (RVLLVENDDC…ELKILWQHVW (119 aa)). Disordered regions lie at residues 203 to 265 (SSGS…KKAV), 291 to 312 (NPEF…QEHD), 339 to 416 (KDEP…KTLD), 464 to 487 (SRYN…SLQD), 509 to 560 (ESLP…QPLP), and 606 to 670 (VNGS…SQRE). The span at 246–259 (ASDGSSDGSGAQSS) shows a compositional bias: low complexity. Polar residues-rich tracts occupy residues 344 to 353 (SKTTGIMRQD), 467 to 487 (NPAS…SLQD), and 519 to 535 (VGSN…NNAF). The span at 538–555 (PGAPKVSSAGSSSVKHSS) shows a compositional bias: low complexity. The span at 641-657 (GKNGNGDGSGSGSGSGS) shows a compositional bias: gly residues. The CCT domain occupies 669–711 (REAALTKFRQKRKERCFRKKVRYQSRKKLAEQRPRVRGQFVRK).

Belongs to the ARR-like family. Post-translationally, phosphorylated. Phosphorylation varies throughout the diurnal cycle.

The protein localises to the nucleus. Functionally, transcriptional repressor of CCA1 and LHY, and positive regulator of LWD1 and LWD2 expression. Represses the expression of other clock proteins and master regulators of plant growth, development and response to abiotic stress. Involved in the positive and negative feedback loops of the circadian clock. Controls photoperiodic flowering response and temperature compensation. Expression of several members of the ARR-like family is controlled by circadian rhythm. APRR9, APRR7, and APRR5 coordinately act on the upstream region of the target genes to repress their expression from noon until midnight. The particular coordinated sequential expression of APRR9, APRR7, APRR5, APRR3 and APPR1 result to circadian waves that may be at the basis of the endogenous circadian clock. This is Two-component response regulator-like APRR7 (APRR7) from Arabidopsis thaliana (Mouse-ear cress).